Here is a 155-residue protein sequence, read N- to C-terminus: Ribosomal RNA large subunit methyltransferase H (155 aa).

S-adenosyl-L-methionine is bound by residues L73, G104, and L123–L128.

Belongs to the RNA methyltransferase RlmH family. As to quaternary structure, homodimer.

The protein resides in the cytoplasm. It catalyses the reaction pseudouridine(1915) in 23S rRNA + S-adenosyl-L-methionine = N(3)-methylpseudouridine(1915) in 23S rRNA + S-adenosyl-L-homocysteine + H(+). Specifically methylates the pseudouridine at position 1915 (m3Psi1915) in 23S rRNA. This is Ribosomal RNA large subunit methyltransferase H from Saccharophagus degradans (strain 2-40 / ATCC 43961 / DSM 17024).